Here is a 764-residue protein sequence, read N- to C-terminus: MEEKELRQDLYECVSLLDVAHFNCCLGNENNAKQQCLEIVKILNRLSKTKAFKEGYHSIIKDISSYTLKFYDSIDKGNHFTYSEKIMWLSSKLYGEFYPPLTVYSHKLDSFHSYLLPIQKVIKEKTDILPLPESLNAHYEQVDIKNWTLDYNALSELYQDLLTNCSFVSSLLSIVELDRKDLLENLISPRQDSSIFKCQLYFNGSSRLVTIDNTLPFLNDSNRNLTINSNENLYWPALVEKAYLKVLGSGYKFEGSNMAIDTYMLTTWIPEIVPINNSKLYDCDDVWENYLSKSVLLGIGTGKLSVELSKKLNFISGHDYLVTSFDPITHTIVLKNPWIENDNSYKRTLTISDQDLHHFKYFYINWNPNAFFKYKFHMTFIYNVKDNTGTHMYQKPQFSLLNPTEDSQNVWLLLEKHLPLKNFSEQLINILIYETQLGDKVIVSNQCIRANKDSSTNSRLMLLKFTMKPKQAYTIVISSTIANTFTLNMYNNISRDFTFTKAKFKYPTTIPTFKDKWTSDNSGGNWSLSTYIDNPQYDIEVKTLPTNIMIGLFSEFKDKFVNFHIFQSDPSGKGHRIRLFDKSKLLVNEKYSMTYQFEDFKSLQPGFYKIVASAFDNNLNGAFELLAIHDSPPNNISITKIHPSLGLFLQKKEFDWNSSNRFKLYFKATQFSSRFTFHLKHYSHINKNTESLSDYRPFIRGSIFDAENSQPIQINEEWNDSLYGLFIDCDIQKPKTYILLVERFESGSGRCKVDIGCNRKFNIL.

In terms of domain architecture, Calpain catalytic spans 95 to 368 (GEFYPPLTVY…FKYFYINWNP (274 aa)). Active-site residues include cysteine 165, histidine 318, and asparagine 336.

This sequence belongs to the peptidase C2 family. PalB/RIM13 subfamily.

In terms of biological role, required for the proteolytic cleavage of the transcription factor RIM101 in response to alkaline ambient pH. The chain is Calpain-like protease palB/RIM13 from Debaryomyces hansenii (strain ATCC 36239 / CBS 767 / BCRC 21394 / JCM 1990 / NBRC 0083 / IGC 2968) (Yeast).